Here is a 200-residue protein sequence, read N- to C-terminus: 3-isopropylmalate dehydratase small subunit (200 aa).

Belongs to the LeuD family. LeuD type 1 subfamily. As to quaternary structure, heterodimer of LeuC and LeuD.

The catalysed reaction is (2R,3S)-3-isopropylmalate = (2S)-2-isopropylmalate. It functions in the pathway amino-acid biosynthesis; L-leucine biosynthesis; L-leucine from 3-methyl-2-oxobutanoate: step 2/4. Functionally, catalyzes the isomerization between 2-isopropylmalate and 3-isopropylmalate, via the formation of 2-isopropylmaleate. This Proteus mirabilis (strain HI4320) protein is 3-isopropylmalate dehydratase small subunit.